A 130-amino-acid polypeptide reads, in one-letter code: Phosphomevalonate dehydratase small subunit (130 aa).

Residue Ser62 is the Proton acceptor of the active site.

Belongs to the AcnX type II small subunit family. In terms of assembly, heterodimer composed of a large subunit (PMDh-L) and a small subunit (PMDh-S).

The catalysed reaction is (R)-5-phosphomevalonate = (2E)-3-methyl-5-phosphooxypent-2-enoate + H2O. It functions in the pathway isoprenoid biosynthesis; isopentenyl diphosphate biosynthesis via mevalonate pathway. Functionally, component of a hydro-lyase that catalyzes the dehydration of mevalonate 5-phosphate (MVA5P) to form trans-anhydromevalonate 5-phosphate (tAHMP). Involved in the archaeal mevalonate (MVA) pathway, which provides fundamental precursors for isoprenoid biosynthesis, such as isopentenyl diphosphate (IPP) and dimethylallyl diphosphate (DMAPP). The sequence is that of Phosphomevalonate dehydratase small subunit from Thermococcus sibiricus (strain DSM 12597 / MM 739).